We begin with the raw amino-acid sequence, 244 residues long: Uridylate kinase (244 aa).

Lys12 to Gly15 serves as a coordination point for ATP. The involved in allosteric activation by GTP stretch occupies residues Gly20 to Gly25. UMP is bound at residue Gly54. The ATP site is built by Gly55 and Arg59. UMP-binding positions include Asp74 and Ile135–Thr142. ATP-binding residues include Asn163, Tyr169, and Asp172.

This sequence belongs to the UMP kinase family. In terms of assembly, homohexamer.

It localises to the cytoplasm. It carries out the reaction UMP + ATP = UDP + ADP. The protein operates within pyrimidine metabolism; CTP biosynthesis via de novo pathway; UDP from UMP (UMPK route): step 1/1. With respect to regulation, allosterically activated by GTP. Inhibited by UTP. Its function is as follows. Catalyzes the reversible phosphorylation of UMP to UDP. In Streptococcus suis (strain 98HAH33), this protein is Uridylate kinase.